A 209-amino-acid chain; its full sequence is Ribosomal RNA large subunit methyltransferase E (209 aa).

Residues glycine 63, tryptophan 65, aspartate 83, aspartate 99, and aspartate 124 each coordinate S-adenosyl-L-methionine. Lysine 164 acts as the Proton acceptor in catalysis.

This sequence belongs to the class I-like SAM-binding methyltransferase superfamily. RNA methyltransferase RlmE family.

It localises to the cytoplasm. The enzyme catalyses uridine(2552) in 23S rRNA + S-adenosyl-L-methionine = 2'-O-methyluridine(2552) in 23S rRNA + S-adenosyl-L-homocysteine + H(+). In terms of biological role, specifically methylates the uridine in position 2552 of 23S rRNA at the 2'-O position of the ribose in the fully assembled 50S ribosomal subunit. The protein is Ribosomal RNA large subunit methyltransferase E of Shewanella woodyi (strain ATCC 51908 / MS32).